A 261-amino-acid chain; its full sequence is Pantothenate synthetase (261 aa).

29-36 (MGALHNGH) serves as a coordination point for ATP. The active-site Proton donor is the histidine 36. Glutamine 60 contributes to the (R)-pantoate binding site. Glutamine 60 contacts beta-alanine. An ATP-binding site is contributed by 147-150 (GEKD). Glutamine 153 is a binding site for (R)-pantoate. 184–187 (LSSR) is an ATP binding site.

The protein belongs to the pantothenate synthetase family. In terms of assembly, homodimer.

Its subcellular location is the cytoplasm. It catalyses the reaction (R)-pantoate + beta-alanine + ATP = (R)-pantothenate + AMP + diphosphate + H(+). The protein operates within cofactor biosynthesis; (R)-pantothenate biosynthesis; (R)-pantothenate from (R)-pantoate and beta-alanine: step 1/1. Functionally, catalyzes the condensation of pantoate with beta-alanine in an ATP-dependent reaction via a pantoyl-adenylate intermediate. In Francisella tularensis subsp. holarctica (strain FTNF002-00 / FTA), this protein is Pantothenate synthetase.